Reading from the N-terminus, the 426-residue chain is 3-phosphoshikimate 1-carboxyvinyltransferase (426 aa).

Residues Lys-22, Ser-23, and Arg-27 each contribute to the 3-phosphoshikimate site. Lys-22 lines the phosphoenolpyruvate pocket. Residues Gly-96 and Arg-124 each coordinate phosphoenolpyruvate. Residues Ser-170, Ser-171, Gln-172, Ser-198, Asp-314, Asn-337, and Lys-341 each contribute to the 3-phosphoshikimate site. Residue Gln-172 participates in phosphoenolpyruvate binding. The Proton acceptor role is filled by Asp-314. Residues Arg-345, Arg-387, and Lys-412 each contribute to the phosphoenolpyruvate site.

The protein belongs to the EPSP synthase family. Monomer.

It is found in the cytoplasm. It carries out the reaction 3-phosphoshikimate + phosphoenolpyruvate = 5-O-(1-carboxyvinyl)-3-phosphoshikimate + phosphate. Its pathway is metabolic intermediate biosynthesis; chorismate biosynthesis; chorismate from D-erythrose 4-phosphate and phosphoenolpyruvate: step 6/7. Catalyzes the transfer of the enolpyruvyl moiety of phosphoenolpyruvate (PEP) to the 5-hydroxyl of shikimate-3-phosphate (S3P) to produce enolpyruvyl shikimate-3-phosphate and inorganic phosphate. In Shewanella baltica (strain OS185), this protein is 3-phosphoshikimate 1-carboxyvinyltransferase.